We begin with the raw amino-acid sequence, 427 residues long: Enolase (427 aa).

Q162 contacts (2R)-2-phosphoglycerate. Residue E206 is the Proton donor of the active site. D243, E286, and D313 together coordinate Mg(2+). (2R)-2-phosphoglycerate is bound by residues K338, R367, S368, and K389. The Proton acceptor role is filled by K338.

It belongs to the enolase family. It depends on Mg(2+) as a cofactor.

Its subcellular location is the cytoplasm. The protein resides in the secreted. It localises to the cell surface. It carries out the reaction (2R)-2-phosphoglycerate = phosphoenolpyruvate + H2O. The protein operates within carbohydrate degradation; glycolysis; pyruvate from D-glyceraldehyde 3-phosphate: step 4/5. In terms of biological role, catalyzes the reversible conversion of 2-phosphoglycerate (2-PG) into phosphoenolpyruvate (PEP). It is essential for the degradation of carbohydrates via glycolysis. In Methanopyrus kandleri (strain AV19 / DSM 6324 / JCM 9639 / NBRC 100938), this protein is Enolase.